Consider the following 154-residue polypeptide: Transcription antitermination protein NusB (154 aa).

The protein belongs to the NusB family.

Involved in transcription antitermination. Required for transcription of ribosomal RNA (rRNA) genes. Binds specifically to the boxA antiterminator sequence of the ribosomal RNA (rrn) operons. This Desulfosudis oleivorans (strain DSM 6200 / JCM 39069 / Hxd3) (Desulfococcus oleovorans) protein is Transcription antitermination protein NusB.